The primary structure comprises 235 residues: Probable septum site-determining protein MinC (235 aa).

The segment at 104–125 (KAVRPAPVEPATPSEPPQNANP) is disordered. Residues 110-119 (PVEPATPSEP) show a composition bias toward pro residues.

This sequence belongs to the MinC family. Interacts with MinD and FtsZ.

Cell division inhibitor that blocks the formation of polar Z ring septums. Rapidly oscillates between the poles of the cell to destabilize FtsZ filaments that have formed before they mature into polar Z rings. Prevents FtsZ polymerization. This Salmonella agona (strain SL483) protein is Probable septum site-determining protein MinC.